The primary structure comprises 841 residues: Probable alpha-glucuronidase A (841 aa).

The first 20 residues, 1 to 20 (MRGLNLFQLILALLLSMVAA), serve as a signal peptide directing secretion. N-linked (GlcNAc...) asparagine glycans are attached at residues Asn-51, Asn-76, Asn-85, Asn-149, Asn-222, Asn-279, Asn-310, Asn-343, Asn-450, Asn-465, Asn-527, Asn-576, Asn-682, Asn-723, and Asn-732.

The protein belongs to the glycosyl hydrolase 67 family.

It is found in the secreted. It carries out the reaction an alpha-D-glucuronoside + H2O = D-glucuronate + an alcohol. In terms of biological role, alpha-glucuronidase involved in the hydrolysis of xylan, a major structural heterogeneous polysaccharide found in plant biomass representing the second most abundant polysaccharide in the biosphere, after cellulose. Releases 4-O-methylglucuronic acid from xylan. This Aspergillus niger (strain ATCC MYA-4892 / CBS 513.88 / FGSC A1513) protein is Probable alpha-glucuronidase A (aguA).